Reading from the N-terminus, the 151-residue chain is Nucleoside diphosphate kinase (151 aa).

ATP is bound by residues lysine 9, phenylalanine 57, arginine 85, threonine 91, arginine 102, and asparagine 112. Residue histidine 115 is the Pros-phosphohistidine intermediate of the active site.

The protein belongs to the NDK family. It depends on Mg(2+) as a cofactor.

It localises to the cytoplasm. The catalysed reaction is a 2'-deoxyribonucleoside 5'-diphosphate + ATP = a 2'-deoxyribonucleoside 5'-triphosphate + ADP. The enzyme catalyses a ribonucleoside 5'-diphosphate + ATP = a ribonucleoside 5'-triphosphate + ADP. In terms of biological role, major role in the synthesis of nucleoside triphosphates other than ATP. The ATP gamma phosphate is transferred to the NDP beta phosphate via a ping-pong mechanism, using a phosphorylated active-site intermediate. The sequence is that of Nucleoside diphosphate kinase from Archaeoglobus fulgidus (strain ATCC 49558 / DSM 4304 / JCM 9628 / NBRC 100126 / VC-16).